The primary structure comprises 150 residues: MRIWVDADACPNVIKEILFRAAERVKTPLILVANQPLKTPPSQYIRSLQVAPGFDVADNHIVQNVEPGELVITADIPLAAEVIDKGAHALNPRGEFYSKENIRQRLMMRDFMETMRSSGEHTGGPAAFNHGDRMEFANQLDRFLAKTSKS.

This sequence belongs to the UPF0178 family.

This Hahella chejuensis (strain KCTC 2396) protein is UPF0178 protein HCH_06960.